Consider the following 481-residue polypeptide: Phosphoenolpyruvate phosphatase (481 aa).

The N-terminal stretch at 1-36 is a signal peptide; the sequence is MPIYTSRSCFYLLLFHIILLCSVDKTLCRQTSSFVR. N109 carries N-linked (GlcNAc...) asparagine glycosylation. The Fe cation site is built by D168, D195, and Y198. A Zn(2+)-binding site is contributed by D195. An N-linked (GlcNAc...) asparagine glycan is attached at N206. Positions 232 and 317 each coordinate Zn(2+). Position 232 (N232) interacts with substrate. The active-site Proton donor is H327. H354 is a binding site for Zn(2+). 354 to 356 contributes to the substrate binding site; the sequence is HVH. A Fe cation-binding site is contributed by H356. N370 and N427 each carry an N-linked (GlcNAc...) asparagine glycan.

Belongs to the metallophosphoesterase superfamily. Purple acid phosphatase family.

It localises to the vacuole lumen. It catalyses the reaction phosphoenolpyruvate + H2O = pyruvate + phosphate. Its function is as follows. Phosphoenolpyruvate phosphatase that probably operates in the vacuole to release phosphate from phosphoenolpyruvate (PEP) under phosphorus starvation. This Allium cepa (Onion) protein is Phosphoenolpyruvate phosphatase (ACPEPP).